The sequence spans 396 residues: Vitamin K-dependent protein Z (396 aa).

The 46-residue stretch at 1–46 (AGSYLLEELFEGHLEKECWEEICVYEEAREVFEDDETTDEFWRTYM) folds into the Gla domain. 4-carboxyglutamate is present on residues Glu7, Glu8, Glu11, Glu15, Glu17, Glu20, Glu21, Glu26, Glu27, Glu30, Glu33, Glu36, and Glu40. Cys18 and Cys23 are oxidised to a cystine. EGF-like domains are found at residues 47-83 (GGSP…PNCA) and 85-126 (AESE…RSCL). 7 disulfides stabilise this stretch: Cys51/Cys62, Cys56/Cys71, Cys73/Cys82, Cys89/Cys101, Cys97/Cys110, Cys112/Cys125, and Cys169/Cys185. Residue Ser53 is glycosylated (O-linked (Glc...) serine). N-linked (GlcNAc...) asparagine glycosylation is present at Asn59. Position 64 is a (3R)-3-hydroxyaspartate (Asp64). Positions 135–357 (TLGPECCQRP…YALWLRQVTQ (223 aa)) constitute a Peptidase S1 domain. Residues Asn191 and Asn289 are each glycosylated (N-linked (GlcNAc...) asparagine). A disulfide bond links Cys284 and Cys298. The segment at 356-396 (TQQPSRASPRGDRGQGRDGEPVPGDRGGRWAPTALPPGPLV) is disordered. Basic and acidic residues predominate over residues 364 to 375 (PRGDRGQGRDGE). Thr388 is a glycosylation site (O-linked (GalNAc...) threonine).

This sequence belongs to the peptidase S1 family. In terms of processing, the iron and 2-oxoglutarate dependent 3-hydroxylation of aspartate and asparagine is (R) stereospecific within EGF domains. In terms of tissue distribution, plasma.

The protein resides in the secreted. In terms of biological role, inhibits activity of the coagulation protease factor Xa in the presence of SERPINA10, calcium and phospholipids. Appears to assist hemostasis by binding thrombin and promoting its association with phospholipid vesicles. The polypeptide is Vitamin K-dependent protein Z (PROZ) (Bos taurus (Bovine)).